Reading from the N-terminus, the 708-residue chain is Kelch-like protein 11 (708 aa).

The first 15 residues, 1 to 15 (MAAAAVAAAAAAAAA), serve as a signal peptide directing secretion. The segment at 47-70 (DFGPGPGISAMEASGGDPGPEAED) is disordered. Residues 94 to 170 (CDITLCFGGA…MYTGRIRVST (77 aa)) form the BTB domain. The BACK domain maps to 205–307 (CVAIHSLAHM…KPTYLTRHVK (103 aa)). 5 Kelch repeats span residues 360 to 407 (VIMV…VTES), 408 to 453 (YVYV…EVKG), 455 to 501 (LYSI…AIED), 503 to 556 (FVYI…VVNS), and 610 to 661 (DVFI…HVRI). Position 465 is a phosphoserine (Ser465).

As to quaternary structure, component of a cullin-RING-based BCR (BTB-CUL3-RBX1) E3 ubiquitin-protein ligase complex. Homodimer. Interacts with CUL3.

Component of a cullin-RING-based BCR (BTB-CUL3-RBX1) E3 ubiquitin-protein ligase complex that mediates the ubiquitination of target proteins, leading most often to their proteasomal degradation. The protein is Kelch-like protein 11 (KLHL11) of Homo sapiens (Human).